A 322-amino-acid polypeptide reads, in one-letter code: Quinolinate synthase (322 aa).

His36 and Ser53 together coordinate iminosuccinate. Position 98 (Cys98) interacts with [4Fe-4S] cluster. Iminosuccinate is bound by residues 124-126 (YIN) and Ser141. Cys184 provides a ligand contact to [4Fe-4S] cluster. Iminosuccinate contacts are provided by residues 210–212 (HPE) and Thr227. Cys278 lines the [4Fe-4S] cluster pocket.

This sequence belongs to the quinolinate synthase family. Type 2 subfamily. [4Fe-4S] cluster serves as cofactor.

It is found in the cytoplasm. It catalyses the reaction iminosuccinate + dihydroxyacetone phosphate = quinolinate + phosphate + 2 H2O + H(+). It participates in cofactor biosynthesis; NAD(+) biosynthesis; quinolinate from iminoaspartate: step 1/1. Its function is as follows. Catalyzes the condensation of iminoaspartate with dihydroxyacetone phosphate to form quinolinate. In Chloroherpeton thalassium (strain ATCC 35110 / GB-78), this protein is Quinolinate synthase.